Consider the following 284-residue polypeptide: Sulfotransferase 2A6 (284 aa).

Residue 43–48 (KSGTNW) coordinates 3'-phosphoadenylyl sulfate. The active-site Proton acceptor is His-98. 3'-phosphoadenylyl sulfate-binding positions include Arg-120, Ser-128, Tyr-183, 217-222 (SSFQVM), and 246-248 (RNG).

Belongs to the sulfotransferase 1 family. As to quaternary structure, oligomer. Liver, exhibiting a sex-dependent spatial localization in the lobule of the liver.

The protein resides in the cytoplasm. It localises to the cytosol. The catalysed reaction is an alcohol + 3'-phosphoadenylyl sulfate = an alkyl sulfate + adenosine 3',5'-bisphosphate + H(+). The enzyme catalyses glycolithocholate + 3'-phosphoadenylyl sulfate = sulfoglycolithocholate + adenosine 3',5'-bisphosphate + H(+). It carries out the reaction taurolithocholate + 3'-phosphoadenylyl sulfate = taurolithocholate 3-sulfate + adenosine 3',5'-bisphosphate + H(+). It catalyses the reaction 3beta-hydroxyandrost-5-en-17-one + 3'-phosphoadenylyl sulfate = dehydroepiandrosterone 3-sulfate + adenosine 3',5'-bisphosphate + H(+). The catalysed reaction is 3beta-hydroxy-5-cholenate + 3'-phosphoadenylyl sulfate = 3beta-sulfo-5-cholenate + adenosine 3',5'-bisphosphate + H(+). The enzyme catalyses deoxycholate + 3'-phosphoadenylyl sulfate = 3alpha-sulfodeoxycholate + adenosine 3',5'-bisphosphate + H(+). It carries out the reaction glycodeoxycholate + 3'-phosphoadenylyl sulfate = 3alpha-sulfoglycodeoxycholate + adenosine 3',5'-bisphosphate + H(+). It catalyses the reaction taurodeoxycholate + 3'-phosphoadenylyl sulfate = 3alpha-sulfotaurodeoxycholate + adenosine 3',5'-bisphosphate + H(+). Sulfotransferase that utilizes 3'-phospho-5'-adenylyl sulfate (PAPS) as sulfonate donor to catalyze the sulfonation of the hydroxyl group of hydroxysteroids and bile acids. Prefered substrates are dehydroepiandrosterone (DHEA, also known as 3beta-hydroxyandrost-5-en-17-one) and 3beta-hydroxy-5-cholenoate, but can also catalyze deoxycholate and its conjugates, and lithocholate conjugates, in vitro. The sequence is that of Sulfotransferase 2A6 from Rattus norvegicus (Rat).